Reading from the N-terminus, the 994-residue chain is Integrator complex subunit 5 (994 aa).

The disordered stretch occupies residues N559–D586. Residues D571 to D583 are compositionally biased toward basic and acidic residues. 2 helical membrane passes run Y769–Y786 and A810–G826.

It belongs to the Integrator subunit 5 family. Belongs to the multiprotein complex Integrator, at least composed of IntS1, IntS2, IntS3, IntS4, omd/IntS5, IntS6, defl/IntS7, IntS8, IntS9, IntS10, IntS11, IntS12, asun/IntS13, IntS14 and IntS15. The core complex associates with protein phosphatase 2A subunits mts/PP2A and Pp2A-29B, to form the Integrator-PP2A (INTAC) complex.

It is found in the nucleus membrane. The protein resides in the nucleus. The protein localises to the cytoplasm. Functionally, component of the integrator complex, a multiprotein complex that terminates RNA polymerase II (Pol II) transcription in the promoter-proximal region of genes. The integrator complex provides a quality checkpoint during transcription elongation by driving premature transcription termination of transcripts that are unfavorably configured for transcriptional elongation: the complex terminates transcription by (1) catalyzing dephosphorylation of the C-terminal domain (CTD) of Pol II subunit Polr2A/Rbp1 and Spt5, and (2) degrading the exiting nascent RNA transcript via endonuclease activity. The integrator complex is also involved in the 3'-end processing of the U7 snRNA, and also the spliceosomal snRNAs U1, U2, U4 and U5. In Drosophila melanogaster (Fruit fly), this protein is Integrator complex subunit 5.